A 430-amino-acid polypeptide reads, in one-letter code: Adenylosuccinate synthetase (430 aa).

GTP contacts are provided by residues 13–19 (GDEGKGK) and 41–43 (GHT). Asp-14 functions as the Proton acceptor in the catalytic mechanism. Asp-14 and Gly-41 together coordinate Mg(2+). Residues 14–17 (DEGK), 39–42 (NAGH), Thr-130, Arg-144, Gln-225, Thr-240, and Arg-304 each bind IMP. His-42 (proton donor) is an active-site residue. 300–306 (ATTGRAR) contacts substrate. GTP contacts are provided by residues Arg-306, 332 to 334 (KLD), and 414 to 416 (STG).

The protein belongs to the adenylosuccinate synthetase family. As to quaternary structure, homodimer. It depends on Mg(2+) as a cofactor.

The protein resides in the cytoplasm. The enzyme catalyses IMP + L-aspartate + GTP = N(6)-(1,2-dicarboxyethyl)-AMP + GDP + phosphate + 2 H(+). Its pathway is purine metabolism; AMP biosynthesis via de novo pathway; AMP from IMP: step 1/2. Functionally, plays an important role in the de novo pathway of purine nucleotide biosynthesis. Catalyzes the first committed step in the biosynthesis of AMP from IMP. The sequence is that of Adenylosuccinate synthetase from Pseudomonas aeruginosa (strain LESB58).